Consider the following 551-residue polypeptide: Calcium-dependent protein kinase 19 (551 aa).

Gly-2 carries the N-myristoyl glycine lipid modification. A disordered region spans residues 12–46 (VKKPTPDISGEQNTEVKSREITPKEQPRQRQPAPR). Basic and acidic residues predominate over residues 25 to 39 (TEVKSREITPKEQPR). In terms of domain architecture, Protein kinase spans 98-357 (YSLGRELGRG…AAQVLEHPWI (260 aa)). ATP-binding positions include 104 to 112 (LGRGQFGIT) and Lys-127. The active-site Proton acceptor is Asp-222. Residue Ser-263 is modified to Phosphoserine. The segment at 363-393 (ASDKPIDSAVLSRMKQLRAMNKLKKLAFKFI) is autoinhibitory domain. 4 consecutive EF-hand domains span residues 400–435 (EELK…LGSR), 436–471 (LTET…RFRV), 472–507 (ERED…YNMG), and 512–542 (IKEI…CSQS). Ca(2+)-binding residues include Asp-413, Asp-415, Ser-417, Thr-419, Glu-424, Asp-449, Asp-451, Asn-453, Thr-455, Glu-460, Asp-485, Asp-487, Ser-489, Glu-496, Asp-520, Asp-522, Asp-524, Ser-526, and Glu-531.

The protein belongs to the protein kinase superfamily. Ser/Thr protein kinase family. CDPK subfamily.

The protein resides in the membrane. It catalyses the reaction L-seryl-[protein] + ATP = O-phospho-L-seryl-[protein] + ADP + H(+). It carries out the reaction L-threonyl-[protein] + ATP = O-phospho-L-threonyl-[protein] + ADP + H(+). With respect to regulation, activated by calcium. Autophosphorylation may play an important role in the regulation of the kinase activity. May play a role in signal transduction pathways that involve calcium as a second messenger. In Arabidopsis thaliana (Mouse-ear cress), this protein is Calcium-dependent protein kinase 19 (CPK19).